Reading from the N-terminus, the 341-residue chain is N-acetyl-gamma-glutamyl-phosphate reductase 2 (341 aa).

C146 is an active-site residue.

Belongs to the NAGSA dehydrogenase family. Type 1 subfamily.

Its subcellular location is the cytoplasm. The catalysed reaction is N-acetyl-L-glutamate 5-semialdehyde + phosphate + NADP(+) = N-acetyl-L-glutamyl 5-phosphate + NADPH + H(+). Its pathway is amino-acid biosynthesis; L-arginine biosynthesis; N(2)-acetyl-L-ornithine from L-glutamate: step 3/4. Its function is as follows. Catalyzes the NADPH-dependent reduction of N-acetyl-5-glutamyl phosphate to yield N-acetyl-L-glutamate 5-semialdehyde. The polypeptide is N-acetyl-gamma-glutamyl-phosphate reductase 2 (Lactiplantibacillus plantarum (strain ATCC BAA-793 / NCIMB 8826 / WCFS1) (Lactobacillus plantarum)).